A 362-amino-acid polypeptide reads, in one-letter code: Prostaglandin F2-alpha receptor (362 aa).

The Extracellular segment spans residues 1-31; that stretch reads MSTNNSVQPVSPASELLSNTTCQLEEDLSIS. N-linked (GlcNAc...) asparagine glycans are attached at residues Asn-4 and Asn-19. The chain crosses the membrane as a helical span at residues 32–54; the sequence is FSIIFMTVGILSNSLAIAILMKA. Residues 55–69 are Cytoplasmic-facing; sequence YQRFRQKYKSSFLLL. A helical membrane pass occupies residues 70-90; the sequence is ASALVITDFFGHLINGTIAVF. Residues 91 to 109 are Extracellular-facing; the sequence is VYASDKDWIYFDKSNILCS. The cysteines at positions 108 and 186 are disulfide-linked. A helical transmembrane segment spans residues 110-131; that stretch reads IFGICMVFSGLCPLFLGSLMAI. Residues 132–152 lie on the Cytoplasmic side of the membrane; the sequence is ERCIGVTKPIFHSTKITTKHV. The helical transmembrane segment at 153-175 threads the bilayer; sequence KMMLSGVCFFAVFVALLPILGHR. The Extracellular portion of the chain corresponds to 176 to 198; sequence DYKIQASRTWCFYKTDQIKDWED. A helical membrane pass occupies residues 199–224; sequence RFYLLLFAFLGLLALGISFVCNAITG. Residues 225 to 250 are Cytoplasmic-facing; that stretch reads ISLLKVKFRSQQHRQGRSHHFEMVIQ. Residues 251-267 form a helical membrane-spanning segment; it reads LLGIMCVSCICWSPFLV. Residues 268-285 are Extracellular-facing; the sequence is TMASIGMNIQDFKDSCER. A helical membrane pass occupies residues 286-307; the sequence is TLFTLRMATWNQILDPWVYILL. The Cytoplasmic portion of the chain corresponds to 308–362; it reads RKAVLRNLYVCTRRCCGVHVISLHVWELSSIKNSLKVAAISDLPVTEKVTQQTST.

It belongs to the G-protein coupled receptor 1 family.

The protein resides in the cell membrane. In terms of biological role, receptor for prostaglandin F2-alpha (PGF2-alpha). The activity of this receptor is mediated by G proteins which activate a phosphatidylinositol-calcium second messenger system. Initiates luteolysis in the corpus luteum. The chain is Prostaglandin F2-alpha receptor (PTGFR) from Ovis aries (Sheep).